Reading from the N-terminus, the 1029-residue chain is Putative B3 domain-containing protein Os03g0621600 (1029 aa).

3 consecutive DNA-binding regions (TF-B3) follow at residues aspartate 147 to serine 240, valine 339 to lysine 430, and glutamate 450 to serine 543. Positions threonine 572 to proline 605 are disordered. Residues serine 591 to proline 605 are compositionally biased toward polar residues. A DNA-binding region (TF-B3 4) is located at residues tyrosine 731 to serine 824. Residues serine 852–serine 867 show a composition bias toward polar residues. The interval serine 852–threonine 882 is disordered. Positions glycine 934 to lysine 1029 form a DNA-binding region, TF-B3 5.

It is found in the nucleus. In Oryza sativa subsp. japonica (Rice), this protein is Putative B3 domain-containing protein Os03g0621600.